We begin with the raw amino-acid sequence, 262 residues long: Putative phosphatase HI_0003 (262 aa).

Catalysis depends on aspartate 9, which acts as the Nucleophile. Residues aspartate 9 and asparagine 11 each contribute to the Mg(2+) site. Phosphate-binding positions include 43–44 and lysine 189; that span reads SA. Residue aspartate 212 participates in Mg(2+) binding. Asparagine 215 lines the phosphate pocket.

Belongs to the HAD-like hydrolase superfamily. Cof family. Mg(2+) is required as a cofactor.

The chain is Putative phosphatase HI_0003 from Haemophilus influenzae (strain ATCC 51907 / DSM 11121 / KW20 / Rd).